The following is a 785-amino-acid chain: MLPAAPGKGLGSPDPAPCGPAPPGNTKDIIMIYEEDAEEWALYLTEVFLHVVKREAILLYRLENFSFRHLELLNLTSYKCKLLILSNSLLRDLTPKKCQFLEKILHSPKSVVTLLCGVKSSDQLYELLNISQSRWEISTEQEPEDYISVIQSIIFKDSEDYFEVNIPTDLRAKHSGEISERKEIEELSEASRNTIPLAVVLPTEIPCENPGEIFIILRDEVIGDTVEVEFTSSNKRIRTRPALWNKKVWCMKALEFPAGSVHVNVYCDGIVKATTKIKYYPTAKAKECLFRMADSGESLCQNSIEELDGVLTSIFKHEIPYYEFQSLQTEICSQNKYTHFKELPTLLHCAAKFGLKNLAIHLLQCSGATWASKMKNMEGSDPAHIAERHGHKELKKIFEDFSIQEIDINNEQENDYEEDIASFSTYIPSTQNPAFHHESRKTYGQSADGAEANEMEGEGKQNGSGMETKHSPLEVGSESSEDQYDDLYVFIPGADPENNSQEPLMSSRPPLPPPRPVANAFQLERPHFTLPGTMVEGQMERSQNWGHPGVRQETGDEPKGEKEKKEEEKEQEEEEDPYTFAEIDDSEYDMILANLSIKKKTGSRSFIINRPPAPTPRPTSIPPKEETTPYIAQVFQQKTARRQSDDDKFCGLPKKQDRARIESPAFSTLRGCLTDGQEELILLQEKVKNGKMSMDEALEKFKHWQMGKSGLEMIQQEKLRQLRDCIIGKRPEEENVYNKLTIVHHPGGKETAHNENKFYNVHFSNKLPARPQVEKEFGFCCKKDH.

Residues 1–154 (MLPAAPGKGL…DYISVIQSII (154 aa)) form an interaction with ITPR2 region. A TIR domain is found at 25–153 (NTKDIIMIYE…EDYISVIQSI (129 aa)). The DBB domain maps to 200-327 (VLPTEIPCEN…EIPYYEFQSL (128 aa)). 2 ANK repeats span residues 342-371 (ELPT…ATWA) and 378-408 (EGSD…EIDI). 4 disordered regions span residues 433-480 (PAFH…SESS), 493-514 (GADP…LPPP), 538-578 (QMER…EDPY), and 606-625 (FIIN…PPKE). Residues 553-568 (ETGDEPKGEKEKKEEE) show a composition bias toward basic and acidic residues. The span at 569–578 (KEQEEEEDPY) shows a compositional bias: acidic residues. Residues 611–621 (PPAPTPRPTSI) show a composition bias toward pro residues.

Interacts with LYN, ITPR1 and ITPR2. Phosphorylated on tyrosines upon BCR activation. In terms of tissue distribution, expressed in B-cell but not T-cell or myeloid cell lines. Highest expression in CD19(+) B-cells, with very low expression in other cell populations.

Its function is as follows. Involved in B-cell receptor (BCR)-induced Ca(2+) mobilization from intracellular stores. Promotes Lyn-mediated phosphorylation of IP3 receptors 1 and 2. This Homo sapiens (Human) protein is B-cell scaffold protein with ankyrin repeats (BANK1).